A 179-amino-acid polypeptide reads, in one-letter code: Ubiquinol-cytochrome c reductase iron-sulfur subunit (179 aa).

A helical transmembrane segment spans residues 14–35 (FLYVATAAVGAAGVAAVAWPFI). In terms of domain architecture, Rieske spans 80 to 173 (AKEIQSEEAA…YEFVDNTKIR (94 aa)). Cysteine 118, histidine 120, cysteine 137, and histidine 140 together coordinate [2Fe-2S] cluster. Cysteine 123 and cysteine 139 form a disulfide bridge.

Belongs to the Rieske iron-sulfur protein family. As to quaternary structure, the main subunits of complex b-c1 are: cytochrome b, cytochrome c1 and the Rieske protein. The cofactor is [2Fe-2S] cluster.

Its subcellular location is the cell membrane. The catalysed reaction is a quinol + 2 Fe(III)-[cytochrome c](out) = a quinone + 2 Fe(II)-[cytochrome c](out) + 2 H(+)(out). Component of the ubiquinol-cytochrome c reductase complex (complex III or cytochrome b-c1 complex), which is a respiratory chain that generates an electrochemical potential coupled to ATP synthesis. The polypeptide is Ubiquinol-cytochrome c reductase iron-sulfur subunit (petA) (Blastochloris viridis (Rhodopseudomonas viridis)).